We begin with the raw amino-acid sequence, 170 residues long: VIP peptides (170 aa).

Positions 1 to 20 (MDTRNKAQLLVLLTLLSVLF) are cleaved as a signal peptide. Positions 21-79 (SQTSAWPLYRAPSALRLGDRIPFEGANEPDQVSLKEDIDMLQNALAENDTPYYDVSRNA) are excised as a propeptide. S76 carries the phosphoserine modification. At M107 the chain carries Methionine amide. The residue at position 152 (N152) is an Asparagine amide. Residues 156-170 (SSEGESPDFPEELEK) constitute a propeptide that is removed on maturation.

It belongs to the glucagon family.

It is found in the secreted. VIP is a neuropeptide involved in a diverse array of physiological processes through activating the PACAP subfamily of class B1 G protein-coupled receptors: VIP receptor 1 (VPR1) and VIP receptor 2 (VPR2). Abundantly expressed throughout the CNS and peripheral nervous systems where they primarily exert neuroprotective and immune modulatory roles. Also causes vasodilation, lowers arterial blood pressure, stimulates myocardial contractility, increases glycogenolysis and relaxes the smooth muscle of trachea, stomach and gall bladder. In terms of biological role, PHM-27 and PHV-42 are two bioactive forms from proteolysis of the same precursor protein, that cause vasodilation. PHM-27 is a potent agonist of the calcitonin receptor CALCR, with similar efficacy as calcitonin. This Homo sapiens (Human) protein is VIP peptides.